The sequence spans 309 residues: Malate dehydrogenase (309 aa).

Residues 9-14 (GAGFVG) and D33 contribute to the NAD(+) site. Residues R82 and R88 each contribute to the substrate site. NAD(+) contacts are provided by residues N95 and 118–120 (VNN). Substrate-binding residues include N120 and R151. Catalysis depends on H175, which acts as the Proton acceptor.

It belongs to the LDH/MDH superfamily. MDH type 3 family.

The catalysed reaction is (S)-malate + NAD(+) = oxaloacetate + NADH + H(+). Its function is as follows. Catalyzes the reversible oxidation of malate to oxaloacetate. The chain is Malate dehydrogenase from Roseiflexus castenholzii (strain DSM 13941 / HLO8).